Reading from the N-terminus, the 92-residue chain is LYR motif-containing protein 4 homolog (92 aa).

Residues 48-68 adopt a coiled-coil conformation; the sequence is AEIDRQMAEGQQNLELIRRQV.

It belongs to the complex I LYR family. In terms of assembly, component of the mitochondrial core iron-sulfur cluster (ISC) assembly complex at least composed of the cysteine desulfurase Nfs1, the scaffold protein IscU, the accessory protein bcn92/Isd11/Lyrm4, and probably fh/frataxin. Interacts with Nfs1.

The protein localises to the mitochondrion. Stabilizing factor of the core iron-sulfur cluster (ISC) assembly complex that regulates the stability and cysteine desulfurase activity of Nfs1 and participates in the [2Fe-2S] clusters assembly on the scaffolding protein IscU. The chain is LYR motif-containing protein 4 homolog from Drosophila melanogaster (Fruit fly).